A 333-amino-acid chain; its full sequence is NADH-quinone oxidoreductase subunit H (333 aa).

The next 8 helical transmembrane spans lie at 17-37, 88-108, 117-137, 159-179, 191-211, 241-261, 273-293, and 313-333; these read IFFAIGVGLLLVVLGFVTYGI, FILAPVIAFAPAFMVLAALPF, IGVGLLYYIAVSGLTTIGVVT, ISYEVPLVMSVIGVILLSGSL, VWFIVVQPIGFLVFLIAAVAE, FFMLAEYVYFFAMAALTTVLF, FIPGAVWFALKFSLVVFLFIW, and VLLPVALVNIFVTALVKQLFF.

This sequence belongs to the complex I subunit 1 family. NDH-1 is composed of 14 different subunits. Subunits NuoA, H, J, K, L, M, N constitute the membrane sector of the complex.

It localises to the cell membrane. The enzyme catalyses a quinone + NADH + 5 H(+)(in) = a quinol + NAD(+) + 4 H(+)(out). NDH-1 shuttles electrons from NADH, via FMN and iron-sulfur (Fe-S) centers, to quinones in the respiratory chain. The immediate electron acceptor for the enzyme in this species is believed to be ubiquinone. Couples the redox reaction to proton translocation (for every two electrons transferred, four hydrogen ions are translocated across the cytoplasmic membrane), and thus conserves the redox energy in a proton gradient. This subunit may bind ubiquinone. This Anoxybacillus flavithermus (strain DSM 21510 / WK1) protein is NADH-quinone oxidoreductase subunit H.